We begin with the raw amino-acid sequence, 264 residues long: uncharacterized protein (264 aa).

3 helical membrane-spanning segments follow: residues 48-68 (LTITLLYLHPVSFSAILLLVF), 112-132 (ITPSAISSGLLVSLVLIFLLA), and 142-162 (LPIAIWIGLISLHPKLRSYLI). The residue at position 260 (Ser-260) is a Phosphoserine.

Its subcellular location is the membrane. This is an uncharacterized protein from Schizosaccharomyces pombe (strain 972 / ATCC 24843) (Fission yeast).